We begin with the raw amino-acid sequence, 511 residues long: MEELQRYLEIDRSRQQHFLYPLLFQEYIYVLAHDHGLNGSILYESMENLGYDNKSSSLIIKRLIIRMHQQNHLMISVNHSNQNRFLGYNKNFDYQMISEGFAVIVEIPFSLQLVSSLEEKEIAKFHNLRSIHSILPFLEDKFSHLNYVSDILIPYPTHLEILVQTLHRWIQDAPSLHLLRFFLHEYTNWNSFITPKKSIYLFTKDFTKENQRLFLFLYNSHVYECESVFIFLRKQSSYLGSKYSGAFIERTHFYGKMEYLVVVLRNDFQKTLWLFKDPFMHYVRYQGKAILASKGAHLLMKKWKYHLVNFWQCHFYLWYQPDRIHINQLSNHSFYFLGYLSSVLLNLSAVRSQMLENSFLINTAIKKFDTIVPIIPLIGALAKAKFCNISGHPISKPVRVDSSDSDIIDRFGRICRNLSHYHSGSSKKQSLYRIKYILRFSCARTLARKHKSTVRTFLKRLGSELLEEFLTEKEQVISLIFAINSSPSHRSYRERIWYLDILCINDLANHE.

Belongs to the intron maturase 2 family. MatK subfamily.

It is found in the plastid. It localises to the chloroplast. Usually encoded in the trnK tRNA gene intron. Probably assists in splicing its own and other chloroplast group II introns. The sequence is that of Maturase K from Chloranthus spicatus (Chulantree).